The chain runs to 553 residues: 3-amino-2-hydroxy-4-methoxybenzoate diazotase (553 aa).

The span at 157–167 shows a compositional bias: low complexity; the sequence is ALPAAGATGPA. The tract at residues 157–178 is disordered; sequence ALPAAGATGPAREGDAPPPAPV.

Belongs to the ATP-dependent AMP-binding enzyme family.

It catalyses the reaction 3-amino-2-hydroxy-4-methoxybenzoate + nitrite + ATP = cremeomycin + AMP + diphosphate + H2O. It functions in the pathway antibiotic biosynthesis. In terms of biological role, part of a gene cluster involved in the biosynthesis of cremeomycin, a light-sensitive o-diazoquinone with antibacterial and antiproliferative effects. Catalyzes the last step of cremeomycin biosynthesis, the diazotization of 3-amino-2-hydroxy-4-methoxybenzoate (3,2,4-AHMBA) with nitrite to generate cremeomycin. This chain is 3-amino-2-hydroxy-4-methoxybenzoate diazotase, found in Streptomyces cremeus.